The primary structure comprises 3726 residues: MEGCDSPVVSGKDNGCGIPQHRQWTELNSAHLPDKPSSMEQPTGESHGPLDSLRAPFNERLADSSTSAGPPAEPASKEVSCNECSASFSSLQTYMEHHCPGTHPPPALREESASDTSEEGEEESDVENLAGEIVYQPDGSAYIVESLSQLAQSGAACGSSSGSGAVPSLFLNSLPGVGGKQGDPSCAAPVYPQIINTSHIASSFGKWFEGSDPAFPNTSALAGLSPVLHSFRVFDVRHKSNKDYLNSDGSAKSSCVSKDVPNNVDLSKFDGFVLYGKRKPILMCFLCKLSFGYVRSFVTHAVHDHRMTLSEEERKLLSNKNISAIIQGIGKDKEPLVSFLEPKNKNFQHPLVSTGNLIGPGHSFYGKFSGIRMEGEEALPAVAAAGPEQPQAGLLTPSTLLNLGGLTSSVLKTPITSVPLGPLASSPTKSSEGKDSGAAEGDKQESGGHQDCFSEKVEPAEEEEAEEEEEEEEEAEEEEEEEEEEEEEEEEASKGLFPNDLEEELEDSPSEESGPPAGGTTKKDLALSNPSISNSPLMPNVLQTLSRGPASTTSNSASNFVVFDGANRRSRLSFNSEGVRANVAEGRRLDFADESANKDSATAPEPNESTEGDDGGFVPHHQHAGSLCELGVGESPSGSGVECPKCDTVLGSSRSLGGHMTMMHSRNSCKTLKCPKCNWHYKYQQTLEAHMKEKHPEPGGSCVYCKSGQPHPRLARGESYTCGYKPFRCEVCNYSTTTKGNLSIHMQSDKHLNNMQNLQNGGGEQVFSHSAGAAAAAAAAAAAAANIGSSWGAPSPTKPKTKPTWRCEVCDYETNVARNLRIHMTSEKHMHNMMLLQQNMTQIQHNRHLGLGSLPSPAEAELYQYYLAQNMNLPNLKMDSTASDAQFMMSGFQLDPTGPMAAMTPALVGGEIPLDMRLGGGQLVSEELMNLGESFIQTNDPSLKLFQCAVCNKFTTDNLDMLGLHMNVERSLSEDEWKAVMGDSYQCKLCRYNTQLKANFQLHCKTDKHVQKYQLVAHIKEGGKANEWRLKCVAIGNPVHLKCNACDYYTNSLEKLRLHTVNSRHEASLKLYKHLQQHESGVEGESCYYHCVLCNYSTKAKLNLIQHVRSMKHQRSESLRKLQRLQKGLPEEDEDLGQIFTIRRCPSTDPEEPVEDAEGPSEASADPEELAKDQGSGSEEGQSKRAASSSQAEKELTDSPATTKRTSFPGSSETPLSSKRPKASEEIKPEQMYQCPYCKYSNADVNRLRVHAMTQHSVQPLLRCPLCQDMLNNKIHLQLHLTHLHSVAPDCVEKLIMTVTAPEMVMPSSMFLPAAAADRDGNSTLEEVGKQPEASEDPGKNILPPASMEHGGDLKPTSADPSCGREDSGFLCWKKGCNQVFKTSATLQTHFNEVHAKRPQLPVSDRHVYKYRCNQCSLAFKTIEKLQLHSQYHVIRAATMCCLCQRSFRTFQALKKHLETSHLELSEADIQQLYGGLLANGDLLAMGDPTLAEDHTIIVEEDKEEESDLEDKQSPTGSDSGSVQEDSGSEPKRALPFRKGPNFTMEKFLDPSRPYKCTVCKESFTQKNILLVHYNSVSHLHKLKRALQESATGQPEPTSSPDNKPFKCNTCNVAYSQSSTLEIHMRSVLHQTKARAAKLEAASGNSNGTGNSGGVSLSSSTPSPVGSSGANNTFTATNPSSAAMAPSVNALSQVPPESVVMPPLGNPISANIASPSEPKEANRKKLADMIASRQQQQQQQQQQQQQAQTLAQAQAQVQAHLQQELQQQAALIQSQLFNPTLLPHFPMTTETLLQLQQQQHLLFPFYIPSAEFQLNPEVSLPVTSGALTLTGSGPGLLEDLKVQVQIPQQSHQQILQQQQQQSQLSLSQSHSALLQPSQHPEKKNKVVIKEKDKESQREREGPEGAEGNTGPQESLPDASKAKEKKDLAPGGGSEGTMLPPRIASDARGNATKALLENFGFELVIQYNENKQKAQKKNGKAEQGGESLEKLECDSCGKLFSNILILKSHQEHVHQNYFPFKQLERFAKQYREHYDKLYPLRPQTPEPPPPPPPPPPPPLPTAPPQPASAPAIPASAPPITSPTIAPAQPSVPLTQLSMPMELPIFSPLMMQTMPLQTLPAQLPPQLGPVEPLPADLAQLYQHQLNPTLLQQQNKRPRTRITDDQLRVLRQYFDINNSPSEEQIKEMADKSGLPQKVIKHWFRNTLFKERQRNKDSPYNFSNPPITSLEELKIDSRPPSPEPQKQEYWGSKRSSRTRFTDYQLRVLQDFFDANAYPKDDEFEQLSNLLNLPTRVIVVWFQNARQKARKNYENQGEGKDGERRELTNDRYIRTSNLNYQCKKCSLVFQRIFDLIKHQKKLCYKDEDEEGQDDSQNEDSMDAMEILTPTSSSCSTPMPSQAYSTPAPSAAAANTAPSAFLQLTAETDELATFNSKAEASDEKPKQADPPSAQPNQTQEKQGQPKPEMQQQLEQLEQKTNAPQPKLPQPAAPSLPQPPPQAPPPQCPLPQSSPSPSQLSHLPLKPLHTSTPQQLANLPPQLIPYQCDQCKLAFPSFEHWQEHQQLHFLSAQNQFIHPQFLDRSLDMPFMLFDPSNPLLASQLLSGAIPQIPASSATSPSTPTSTMNTLKRKLEEKASASPGENDSGTGGEEPQRDKRLRTTITPEQLEILYQKYLLDSNPTRKMLDHIAHEVGLKKRVVQVWFQNTRARERKGQFRAVGPAQAHRRCPFCRALFKAKTALEAHIRSRHWHEAKRAGYNLTLSAMLLDCDGGLQMKGDIFDGTSFSHLPPSSSDGQGVPLSPVSKTMELSPRTLLSPSSIKVEGIEDFESPSMSSVNLNFDQTKLDNDDCSSVNTAITDTTTGDEGNADNDSATGIATETKSSAPNEGLTKAAMMAMSEYEDRLSSGLVSPAPSFYSKEYDNEGTVDYSETSSLADPCSPSPGASGSAGKSGDGGDRPGQKRFRTQMTNLQLKVLKSCFNDYRTPTMLECEVLGNDIGLPKRVVQVWFQNARAKEKKSKLSMAKHFGINQTSYEGPKTECTLCGIKYSARLSVRDHIFSQQHISKVKDTIGSQLDKEKEYFDPATVRQLMAQQELDRIKKANEVLGLAAQQQGMFDNAPLQALNLPTTYPALQGIPPVLLPGLNRPSLPGFTPANTALTSPKPNLMGLPSTTVPSPGLPTSGLPNKPSSASLSSPTPAQATMAMAPQPPPQPQQPQPPVQQPPPPPAAQQIPAPQLTPQQQRKDKDGEKGKEKEKAHKGKGEPLPVPKKEKGEAPPAGTGTISAPLPAMEYAVDPAQLQALQAALTSDPTALLTSQFLPYFVPGFSPYYAPQIPGALQSGYLQPMYGMEGLFPYSPALSRPLMGLSPGSLLQQYQQYQQSLQEAIQQQQQQQQQQQQQQQQQQRQLQQQQQQQQQKVQQQQQQQQQPKASQTPVPQGAASPDKDPAKESPKPEEQKNVPRELSPLLPKPPEEPEAESKSASADSLCDPFIVPKVQYKLVCRKCQAGFGDEEAARSHLKSLCCFGQSVVNLQEMVLHVPTGSGGGGGGGGGSGGGGGSYHCLACESALCGEEALSQHLESALHKHRTITRAARNAKEHPSLLPHSACFPDPSTASTSQSAAHSNDSPPPPSAAPSSSASPHASRKSWPPVGSRASAAKPPSFPPLSSSSTVTSSSCSTSGVQPSMPTDDYSEESDTDLSQKSDGPASPVEGPKDPSCPKDSGLTSVGTDTFRL.

2 disordered regions span residues 1–79 (MEGC…SKEV) and 95–129 (MEHH…VENL). The segment at 79 to 103 (VSCNECSASFSSLQTYMEHHCPGTH) adopts a C2H2-type 1 zinc-finger fold. The segment covering 116-126 (TSEEGEEESDV) has biased composition (acidic residues). A C2H2-type 2 zinc finger spans residues 282–305 (LMCFLCKLSFGYVRSFVTHAVHDH). Residues 417–557 (SVPLGPLASS…GPASTTSNSA (141 aa)) form a disordered region. A Phosphoserine modification is found at Ser-426. A Phosphothreonine modification is found at Thr-428. Over residues 431-459 (SEGKDSGAAEGDKQESGGHQDCFSEKVEP) the composition is skewed to basic and acidic residues. Acidic residues-rich tracts occupy residues 460-491 (AEEE…EEEE) and 500-510 (DLEEELEDSPS). The span at 528–557 (SNPSISNSPLMPNVLQTLSRGPASTTSNSA) shows a compositional bias: polar residues. Ser-535 and Ser-573 each carry phosphoserine. The disordered stretch occupies residues 590–621 (DFADESANKDSATAPEPNESTEGDDGGFVPHH). 3 consecutive C2H2-type zinc fingers follow at residues 641–664 (VECP…TMMH), 672–695 (LKCP…KEKH), and 727–751 (FRCE…SDKH). The C2H2-type 6; atypical zinc-finger motif lies at 805-829 (WRCEVCDYETNVARNLRIHMTSEKH). The C2H2-type 7; degenerate zinc-finger motif lies at 946–969 (FQCAVCNKFTTDNLDMLGLHMNVE). The segment at 985 to 1009 (YQCKLCRYNTQLKANFQLHCKTDKH) adopts a C2H2-type 8; atypical zinc-finger fold. The segment at 1041–1065 (LKCNACDYYTNSLEKLRLHTVNSRH) adopts a C2H2-type 9; atypical zinc-finger fold. A C2H2-type 10; atypical zinc finger spans residues 1089-1113 (YHCVLCNYSTKAKLNLIQHVRSMKH). The disordered stretch occupies residues 1125–1228 (LQKGLPEEDE…KRPKASEEIK (104 aa)). Residues 1149-1159 (DPEEPVEDAEG) are compositionally biased toward acidic residues. 2 stretches are compositionally biased toward polar residues: residues 1175-1191 (GSGS…SSSQ) and 1199-1217 (SPAT…TPLS). Phosphoserine is present on Ser-1207. Residues 1233 to 1256 (YQCPYCKYSNADVNRLRVHAMTQH) form a C2H2-type 11; atypical zinc finger. A C2H2-type 12 zinc finger spans residues 1262 to 1285 (LRCPLCQDMLNNKIHLQLHLTHLH). Positions 1320-1361 (DGNSTLEEVGKQPEASEDPGKNILPPASMEHGGDLKPTSADP) are disordered. 3 C2H2-type zinc fingers span residues 1370 to 1395 (FLCW…NEVH), 1411 to 1433 (YRCN…SQYH), and 1439 to 1462 (TMCC…ETSH). A disordered region spans residues 1500-1539 (EEDKEEESDLEDKQSPTGSDSGSVQEDSGSEPKRALPFRK). A compositionally biased stretch (polar residues) spans 1514–1526 (SPTGSDSGSVQED). The C2H2-type 16 zinc finger occupies 1555 to 1579 (YKCTVCKESFTQKNILLVHYNSVSH). Ser-1600 carries the post-translational modification Phosphoserine. The segment at 1606–1630 (FKCNTCNVAYSQSSTLEIHMRSVLH) adopts a C2H2-type 17 zinc-finger fold. 3 disordered regions span residues 1639–1678 (LEAA…TATN), 1706–1738 (NPIS…QQQQ), and 1866–1943 (LSQS…PRIA). Positions 1643 to 1669 (SGNSNGTGNSGGVSLSSSTPSPVGSSG) are enriched in low complexity. The segment covering 1717–1727 (EPKEANRKKLA) has biased composition (basic and acidic residues). Low complexity predominate over residues 1866–1878 (LSQSHSALLQPSQ). The segment covering 1879-1902 (HPEKKNKVVIKEKDKESQREREGP) has biased composition (basic and acidic residues). The C2H2-type 18 zinc finger occupies 1990 to 2013 (LECDSCGKLFSNILILKSHQEHVH). Disordered stretches follow at residues 2037-2089 (YPLR…AQPS) and 2211-2249 (NKDS…WGSK). The segment covering 2041-2066 (PQTPEPPPPPPPPPPPPLPTAPPQPA) has biased composition (pro residues). Residues 2152–2211 (NKRPRTRITDDQLRVLRQYFDINNSPSEEQIKEMADKSGLPQKVIKHWFRNTLFKERQRN) constitute a DNA-binding region (homeobox 1). Polar residues predominate over residues 2214-2223 (SPYNFSNPPI). Positions 2249-2308 (KRSSRTRFTDYQLRVLQDFFDANAYPKDDEFEQLSNLLNLPTRVIVVWFQNARQKARKNY) form a DNA-binding region, homeobox 2. The segment at 2335-2358 (YQCKKCSLVFQRIFDLIKHQKKLC) adopts a C2H2-type 19; atypical zinc-finger fold. Residue Lys-2356 forms a Glycyl lysine isopeptide (Lys-Gly) (interchain with G-Cter in SUMO1) linkage. Disordered regions lie at residues 2383–2405 (TPTS…APSA) and 2429–2529 (NSKA…PQQL). Low complexity predominate over residues 2458-2478 (QPKPEMQQQLEQLEQKTNAPQ). Over residues 2479–2507 (PKLPQPAAPSLPQPPPQAPPPQCPLPQSS) the composition is skewed to pro residues. A compositionally biased stretch (low complexity) spans 2508-2521 (PSPSQLSHLPLKPL). Residues 2539–2561 (YQCDQCKLAFPSFEHWQEHQQLH) form a C2H2-type 20 zinc finger. The Nuclear localization signal signature appears at 2624-2626 (KRK). Residues 2628–2656 (EEKASASPGENDSGTGGEEPQRDKRLRTT) form a disordered region. A Phosphoserine modification is found at Ser-2634. The segment at residues 2650-2709 (DKRLRTTITPEQLEILYQKYLLDSNPTRKMLDHIAHEVGLKKRVVQVWFQNTRARERKGQ) is a DNA-binding region (homeobox 3). The C2H2-type 21 zinc-finger motif lies at 2720–2743 (RRCPFCRALFKAKTALEAHIRSRH). Over residues 2780–2789 (SHLPPSSSDG) the composition is skewed to polar residues. The segment at 2780–2805 (SHLPPSSSDGQGVPLSPVSKTMELSP) is disordered. Residues Ser-2795 and Ser-2804 each carry the phosphoserine modification. Residue Lys-2815 forms a Glycyl lysine isopeptide (Lys-Gly) (interchain with G-Cter in SUMO1); alternate linkage. Residue Lys-2815 forms a Glycyl lysine isopeptide (Lys-Gly) (interchain with G-Cter in SUMO2); alternate linkage. The disordered stretch occupies residues 2850-2877 (AITDTTTGDEGNADNDSATGIATETKSS). Residues Ser-2900 and Ser-2904 each carry the phosphoserine modification. The disordered stretch occupies residues 2920-2955 (VDYSETSSLADPCSPSPGASGSAGKSGDGGDRPGQK). Low complexity predominate over residues 2929–2944 (ADPCSPSPGASGSAGK). The homeobox 4 DNA-binding region spans 2952 to 3011 (PGQKRFRTQMTNLQLKVLKSCFNDYRTPTMLECEVLGNDIGLPKRVVQVWFQNARAKEKK). Residues 3032 to 3056 (TECTLCGIKYSARLSVRDHIFSQQH) form a C2H2-type 22 zinc finger. Disordered regions lie at residues 3145-3274 (FTPA…AGTG) and 3415-3476 (QQQQ…SASA). Polar residues predominate over residues 3147-3156 (PANTALTSPK). A compositionally biased stretch (low complexity) spans 3181-3199 (PSSASLSSPTPAQATMAMA). The span at 3200-3221 (PQPPPQPQQPQPPVQQPPPPPA) shows a compositional bias: pro residues. Residues 3222–3234 (AQQIPAPQLTPQQ) show a composition bias toward low complexity. Residues 3235–3267 (QRKDKDGEKGKEKEKAHKGKGEPLPVPKKEKGE) are compositionally biased toward basic and acidic residues. Lys-3262 is covalently cross-linked (Glycyl lysine isopeptide (Lys-Gly) (interchain with G-Cter in SUMO1)). Position 3434 is a phosphoserine (Ser-3434). The segment covering 3435–3453 (PDKDPAKESPKPEEQKNVP) has biased composition (basic and acidic residues). A Phosphoserine modification is found at Ser-3457. A C2H2-type 23 zinc finger spans residues 3552-3576 (YHCLACESALCGEEALSQHLESALH). The interval 3588–3726 (AKEHPSLLPH…TSVGTDTFRL (139 aa)) is disordered. 2 stretches are compositionally biased toward low complexity: residues 3605–3618 (STAS…HSND) and 3645–3677 (SRAS…VQPS). Ser-3616 carries the phosphoserine modification. Ser-3700 is subject to Phosphoserine. The segment covering 3715 to 3726 (GLTSVGTDTFRL) has biased composition (polar residues).

As to quaternary structure, interacts with ALKBH4 and PIAS3. Interacts with FNBP3. Interacts with ESR1, RUNX3, TRIM25, SMAD2 and SMAD3. In terms of processing, phosphorylated at Ser-2634 in both embryonic and adult brain. Phosphorylation at Ser-1600, Ser-2795, Ser-2804, Ser-2900, Ser-3434, Ser-3616 and Ser-3700 is restricted to the embryonic brain. Hyperphosphorylation in embryonic brain protects ZFHX3 from calpain/CAPN1-mediated degradation. Post-translationally, ubiquitinated, leading to its proteasomal degradation. Nuclear localization is essential for its sumoylation. As to expression, expressed in suprachiasmatic nucleus (SCN) of the brain (at protein level). Expressed in skeletal muscle. Levels of expression are high in myoblasts but low in differentiated muscle. Expressed in the heart, primarily in the atria.

The protein localises to the nucleus. Its subcellular location is the cytoplasm. Its function is as follows. Transcriptional regulator which can act as an activator or a repressor. Inhibits the enhancer element of the AFP gene by binding to its AT-rich core sequence. In concert with SMAD-dependent TGF-beta signaling can repress the transcription of AFP via its interaction with SMAD2/3. Regulates the circadian locomotor rhythms via transcriptional activation of neuropeptidergic genes which are essential for intercellular synchrony and rhythm amplitude in the suprachiasmatic nucleus (SCN) of the brain. Regulator of myoblasts differentiation through the binding to the AT-rich sequence of MYF6 promoter and promoter repression. Down-regulates the MUC5AC promoter in gastric cancer. In association with RUNX3, up-regulates CDKN1A promoter activity following TGF-beta stimulation. This chain is Zinc finger homeobox protein 3 (Zfhx3), found in Mus musculus (Mouse).